Reading from the N-terminus, the 382-residue chain is uncharacterized protein (382 aa).

Transmembrane regions (helical) follow at residues 8 to 28, 41 to 61, 73 to 93, 94 to 114, 133 to 153, 157 to 177, 208 to 228, 235 to 255, 274 to 294, 295 to 315, 325 to 345, and 349 to 369; these read VLLL…LNTL, WQVG…TLIA, SYHY…LSVD, FWSW…IWVI, AAYM…LGVV, LLSV…PLLF, GCII…LYLS, ASVG…QWPI, VVIL…ALFI, LGCA…EKVS, ALLM…SLLM, and SDNL…MMLL.

The protein belongs to the major facilitator superfamily. YcaD (TC 2.A.1.26) family.

It is found in the cell inner membrane. This is an uncharacterized protein from Yersinia enterocolitica serotype O:8 / biotype 1B (strain NCTC 13174 / 8081).